The primary structure comprises 367 residues: Heparan sulfate glucosamine 3-O-sulfotransferase 2 (367 aa).

Topologically, residues 1 to 19 (MAYRVLGRAGPPQPRRARR) are cytoplasmic. A helical; Signal-anchor for type II membrane protein membrane pass occupies residues 20–39 (LLFAFTLSLSCTYLCYSFLC). Residues 40–367 (CCDGLGQSRL…ETVGQDFRWE (328 aa)) lie on the Lumenal side of the membrane. A disordered region spans residues 66-115 (LLAKSRPCDPPGPTPSEPSAPSAPAAAAPAPRLSGSNHSGSPKPGTKRLP). Residues 73–83 (CDPPGPTPSEP) show a composition bias toward pro residues. A compositionally biased stretch (low complexity) spans 84 to 96 (SAPSAPAAAAPAP). Asn-102 carries an N-linked (GlcNAc...) asparagine glycan. 3'-phosphoadenylyl sulfate is bound at residue 124–128 (KGGTR). Substrate is bound by residues 146-152 (EPHFFDR) and 177-180 (KTPS). N-linked (GlcNAc...) asparagine glycosylation is present at Asn-193. 2 residues coordinate 3'-phosphoadenylyl sulfate: Arg-205 and Ser-213. Asn-235 is a glycosylation site (N-linked (GlcNAc...) asparagine). Position 245-246 (245-246 (WN)) interacts with substrate. N-linked (GlcNAc...) asparagine glycosylation is present at Asn-306. Residues Cys-313 and Cys-325 are joined by a disulfide bond. 3'-phosphoadenylyl sulfate is bound at residue 330–334 (KGRTH).

This sequence belongs to the sulfotransferase 1 family.

The protein resides in the golgi apparatus membrane. It carries out the reaction alpha-D-glucosaminyl-[heparan sulfate](n) + 3'-phosphoadenylyl sulfate = 3-sulfo-alpha-D-glucosaminyl-[heparan sulfate](n) + adenosine 3',5'-bisphosphate + H(+). In terms of biological role, sulfotransferase that utilizes 3'-phospho-5'-adenylyl sulfate (PAPS) to catalyze the transfer of a sulfo group to an N-unsubstituted glucosamine linked to a 2-O-sulfo iduronic acid unit on heparan sulfate. Catalyzes the O-sulfation of glucosamine in GlcA2S-GlcNS. Unlike HS3ST1/3-OST-1, does not convert non-anticoagulant heparan sulfate to anticoagulant heparan sulfate. The polypeptide is Heparan sulfate glucosamine 3-O-sulfotransferase 2 (Hs3st2) (Mus musculus (Mouse)).